The following is a 465-amino-acid chain: MSNCCRILWIAIVIGLGVLYYEITKEFPKPNIPLDTWWGTGKSQKIDTSMRPFKIAINDEVLNTLKVKLSDVSFTPPLEGIDFQYGFNTNTLKKLVDFWRTQYNWREREALLNKYPHFKTNIQGLDIHYVHIKPQVSKNIHVLPMIMVHGWPGSFVEFYKIIPMLTTPRTDYNFVFELILPSIPGYGFSQAAAKPGLGATQIAVIMHNLMDRIGFKKYYVQGGDWGSRIVSAMSTLFPENVLGHHSNLCFLNTLSSNIKSFVGSLFPEWFAGKQNVHKIYPLSEHFFTLLEESGYFHIQATKPDTVGVALRDSPAGLAAYILEKFSTGTNKAWRSAKDGNLQSKFTFTELLDNVMIYYVTGSITTSMRIYAESYSWDHLSLNMDRVPTIVPTACAKFPHEIAYKTDFQLAEKYKTLLQSTIMPRGGHFAALEEPLLLAEDIFSAVKKFIDHHSKKDSKNQENRDL.

Residues 7-27 form a helical membrane-spanning segment; sequence ILWIAIVIGLGVLYYEITKEF. The active-site Nucleophile is aspartate 224. The active-site Proton donor is tyrosine 370. Histidine 427 serves as the catalytic Proton acceptor.

Belongs to the peptidase S33 family.

Its subcellular location is the microsome membrane. It localises to the endoplasmic reticulum membrane. The catalysed reaction is cis-stilbene oxide + H2O = (1R,2R)-hydrobenzoin. It carries out the reaction 1-(4-methoxyphenyl)-N-methyl-N-[(3-methyloxetan-3-yl)methyl]methanamine + H2O = 2-{[(4-methoxybenzyl)(methyl)amino]methyl}-2-methylpropane-1,3-diol. Catalyzes juvenile hormone hydrolysis. This chain is Juvenile hormone epoxide hydrolase 2, found in Ctenocephalides felis (Cat flea).